A 336-amino-acid polypeptide reads, in one-letter code: 2-phospho-L-lactate transferase (336 aa).

Asp-49 contributes to the 7,8-didemethyl-8-hydroxy-5-deazariboflavin binding site.

This sequence belongs to the CofD family. Homodimer. Mg(2+) serves as cofactor.

The catalysed reaction is (2S)-lactyl-2-diphospho-5'-guanosine + 7,8-didemethyl-8-hydroxy-5-deazariboflavin = oxidized coenzyme F420-0 + GMP + H(+). Its pathway is cofactor biosynthesis; coenzyme F420 biosynthesis. Functionally, catalyzes the transfer of the 2-phospholactate moiety from (2S)-lactyl-2-diphospho-5'-guanosine to 7,8-didemethyl-8-hydroxy-5-deazariboflavin (FO) with the formation of oxidized coenzyme F420-0 and GMP. This is 2-phospho-L-lactate transferase from Halobacterium salinarum (strain ATCC 700922 / JCM 11081 / NRC-1) (Halobacterium halobium).